Consider the following 279-residue polypeptide: Thymidylate synthase 1 (279 aa).

Residue 141–142 coordinates dUMP; that stretch reads RR. Catalysis depends on Cys161, which acts as the Nucleophile. DUMP-binding positions include 181 to 184, Asn192, and 222 to 224; these read RSND and HVY. Asp184 lines the (6R)-5,10-methylene-5,6,7,8-tetrahydrofolate pocket. Ala278 contributes to the (6R)-5,10-methylene-5,6,7,8-tetrahydrofolate binding site.

Belongs to the thymidylate synthase family. Bacterial-type ThyA subfamily. In terms of assembly, homodimer.

It is found in the cytoplasm. The catalysed reaction is dUMP + (6R)-5,10-methylene-5,6,7,8-tetrahydrofolate = 7,8-dihydrofolate + dTMP. It participates in pyrimidine metabolism; dTTP biosynthesis. Functionally, catalyzes the reductive methylation of 2'-deoxyuridine-5'-monophosphate (dUMP) to 2'-deoxythymidine-5'-monophosphate (dTMP) while utilizing 5,10-methylenetetrahydrofolate (mTHF) as the methyl donor and reductant in the reaction, yielding dihydrofolate (DHF) as a by-product. This enzymatic reaction provides an intracellular de novo source of dTMP, an essential precursor for DNA biosynthesis. The polypeptide is Thymidylate synthase 1 (Bacillus subtilis (strain 168)).